The chain runs to 780 residues: MATEAAPMDEKAKRMRDLLSSFYAPDPSISTSGSSINASFDNINSTSFDADQYMDLMIKKSNLEVLLQRHVQMAAEIKNLDTDLQMLVYENYNKFISATDTIKRMKSNIFGMEGNMDQLLQKIMSVQSKSDGVNTSLFEKREHIEKLHRTRNLLRKVQFIYDLPARLQKCIKSEAYGDAVRFYTGAMPILKVYGDTSFQDCRRASEEAIEIIIKNLQTKLFSDSESIQARAEAAVLLKQLDVPVDSLKAKLLEKLEQSLDGLQIKPEEASTLVEDDDSSNDTESNDQHPAKIHEDAVRGFSEAIRAYREIFPDSEERLFKLARALTAMHFEYMELYIKKRVSAADFLGIFRIVWEDVVLMDEVLPEAALSDLSAEAAQVTLKQFVARMFSHLQQDISDTLLKFDINQKEAVEGELLKVVLEASQKAVLQGTTNIFQDFRQLLDEKTGIFIKMKDLISGWIQKGSQDFFRSLEAQFLVLSGKTSSSNDIEGKSSDKIHAGLILVLAQLSVFIEQKVIPRVTEEIAASFSGGNSQAFENGPAFIPGELCRVFHAASEKLLQHYIDTRTQKVSVLLRKRFKTPNWVKHKEPREVHMYVDMFLHELEEVGKEVKQVLPQGTFRKHKRTDSNGSNTTTSSRSNTLHNDKMARSNSQRARSQLFETHLAKLFKQKVEIFTKVEFTQESVVTTTVKLCLKSLQEYVRLQTFNRSGFQQIQLDIQFLKAPLKEAVEDEAAIDFLLDEVIVAASERCLDVIPLEPPILDKLIQAKLAKSKEHNNNTVSS.

An N-acetylalanine modification is found at A2. Disordered stretches follow at residues 270–292 (STLVEDDDSSNDTESNDQHPAKI) and 615–651 (QGTFRKHKRTDSNGSNTTTSSRSNTLHNDKMARSNSQ). Positions 273–284 (VEDDDSSNDTES) are enriched in acidic residues. Over residues 626–639 (SNGSNTTTSSRSNT) the composition is skewed to low complexity.

This sequence belongs to the VPS51 family. As to quaternary structure, component of the Golgi-associated retrograde protein (GARP) complex, composed by VPS51, VPS52, VPS53 and VPS54. Component of the endosome-associated retrograde protein (EARP) complex, composed of VPS51, VPS52, VPS53 and VPS50. Interacts with VPS52. As to expression, expressed in primary and lateral roots, shoots of seedlings and flowers.

It is found in the golgi apparatus. The protein resides in the trans-Golgi network. The protein localises to the recycling endosome. Its subcellular location is the prevacuolar compartment. Functionally, acts as a component of the GARP complex that is involved in retrograde transport from early and late endosomes to the trans-Golgi network (TGN). The GARP complex is required for the maintenance of protein retrieval from endosomes to the TGN, acid hydrolase sorting, lysosome function, endosomal cholesterol traffic and autophagy. VPS51 participates in retrograde transport of acid hydrolase receptors, likely by promoting tethering and SNARE-dependent fusion of endosome-derived carriers to the TGN. Acts as a component of the EARP complex that is involved in endocytic recycling. The EARP complex associates with Rab4-positive endosomes and promotes recycling of internalized transferrin receptor (TFRC) to the plasma membrane. Required for vacuolar targeting and cellular trafficking. Involved in the regulation of vascular tissue patterning, probably by regulating PIN1 expression pattern, thus modulating auxin flux. Important to prevent PIN1 accumulation within margin cells, possibly by targeting PIN1 to the lytic vacuole. Regulates PIN1 and ATHB8 expression pattern in secondary veins. The protein is Vacuolar protein sorting-associated protein 51 homolog of Arabidopsis thaliana (Mouse-ear cress).